The chain runs to 354 residues: Trans-L-3-hydroxyproline dehydratase (354 aa).

The active-site Proton acceptor is Cys-104. Substrate is bound by residues 105–106 (GH), Asp-269, and 274–275 (GS).

This sequence belongs to the proline racemase family. In terms of assembly, homodimer.

It carries out the reaction trans-3-hydroxy-L-proline = 1-pyrroline-2-carboxylate + H2O. Its function is as follows. Catalyzes the dehydration of trans-3-hydroxy-L-proline to delta-1-pyrroline-2-carboxylate (Pyr2C). This Pongo abelii (Sumatran orangutan) protein is Trans-L-3-hydroxyproline dehydratase (L3HYPDH).